Consider the following 417-residue polypeptide: V-set and immunoglobulin domain-containing protein 8 (417 aa).

Positions 1–21 (MGVRGALHLLLVCLSPALLSA) are cleaved as a signal peptide. 2 Ig-like V-type domains span residues 22-140 (VRIN…VIVT) and 145-256 (PAVP…VKVS). Topologically, residues 22-262 (VRINGDGQEV…VKVSDSQRVG (241 aa)) are extracellular. 2 cysteine pairs are disulfide-bonded: cysteine 44/cysteine 125 and cysteine 166/cysteine 238. The chain crosses the membrane as a helical span at residues 263–283 (MIVGAVLGSLLMLACLALGIW). Residues 284-417 (GLICCCCGGG…QRSCKDGLLV (134 aa)) lie on the Cytoplasmic side of the membrane.

It is found in the membrane. The sequence is that of V-set and immunoglobulin domain-containing protein 8 (Vsig8) from Mus musculus (Mouse).